The sequence spans 290 residues: U3 small nucleolar ribonucleoprotein protein IMP4 (290 aa).

The Brix domain occupies 86–267 (PRIIVTTSRD…LFELRLGTLE (182 aa)).

Component of a heterotrimeric complex containing IMP3, IMP4 and MPP10. Interacts with MPP10. Component of the ribosomal small subunit (SSU) processome composed of at least 40 protein subunits and snoRNA U3.

It is found in the nucleus. The protein resides in the nucleolus. Required for the early cleavages at sites A0, A1 and A2 during 18S ribosomal pre-RNA processing. This is U3 small nucleolar ribonucleoprotein protein IMP4 (IMP4) from Saccharomyces cerevisiae (strain ATCC 204508 / S288c) (Baker's yeast).